Here is a 142-residue protein sequence, read N- to C-terminus: MAAKTVQLDIVSAENSIFHGQVSFLEVNGAEGELGIMPNHVALLTKIKPGMARFIKQDGSEEVLYLSGGLLEVQPTAISVLADVALRADDIDEKAALEAKERAEQAIANAGTDFNYEAATIELAKSLAQLRVVECIKKNITR.

This sequence belongs to the ATPase epsilon chain family. In terms of assembly, F-type ATPases have 2 components, CF(1) - the catalytic core - and CF(0) - the membrane proton channel. CF(1) has five subunits: alpha(3), beta(3), gamma(1), delta(1), epsilon(1). CF(0) has three main subunits: a, b and c.

Its subcellular location is the cell inner membrane. Its function is as follows. Produces ATP from ADP in the presence of a proton gradient across the membrane. In Shewanella frigidimarina (strain NCIMB 400), this protein is ATP synthase epsilon chain.